Here is a 299-residue protein sequence, read N- to C-terminus: ATP phosphoribosyltransferase (299 aa).

It belongs to the ATP phosphoribosyltransferase family. Long subfamily. As to quaternary structure, equilibrium between an active dimeric form, an inactive hexameric form and higher aggregates. Interconversion between the various forms is largely reversible and is influenced by the natural substrates and inhibitors of the enzyme. Requires Mg(2+) as cofactor.

The protein resides in the cytoplasm. It carries out the reaction 1-(5-phospho-beta-D-ribosyl)-ATP + diphosphate = 5-phospho-alpha-D-ribose 1-diphosphate + ATP. It participates in amino-acid biosynthesis; L-histidine biosynthesis; L-histidine from 5-phospho-alpha-D-ribose 1-diphosphate: step 1/9. With respect to regulation, feedback inhibited by histidine. Its function is as follows. Catalyzes the condensation of ATP and 5-phosphoribose 1-diphosphate to form N'-(5'-phosphoribosyl)-ATP (PR-ATP). Has a crucial role in the pathway because the rate of histidine biosynthesis seems to be controlled primarily by regulation of HisG enzymatic activity. This Klebsiella pneumoniae (strain 342) protein is ATP phosphoribosyltransferase.